The sequence spans 222 residues: Putative ankyrin repeat protein L36 (222 aa).

7 ANK repeats span residues 1 to 14, 15 to 44, 45 to 74, 76 to 104, 105 to 134, 136 to 161, and 163 to 191; these read MVKYLVAQGVNVDA, QNSRALCLACKYGYINIAYFLMHEGANIYA, NDNHPIRLAAEYGHLSIVKLLIYHNANIRA, EDSALRMAAKRNKLEVVKYIIEKIGTNYE, YSDYPLAYAAGKGHIEMIEYLLSIGEKITD, AMFMAINNGHVGTVKYLIDESQSLPC, and SYSELAKITRKGHLEMIKLLNNRGIKINK.

The polypeptide is Putative ankyrin repeat protein L36 (Acanthamoeba polyphaga (Amoeba)).